The chain runs to 297 residues: Glycerol-3-phosphate dehydrogenase [NAD(P)+] (297 aa).

The NADPH site is built by W11, R33, and K79. Positions 79, 107, and 109 each coordinate sn-glycerol 3-phosphate. Residue A111 participates in NADPH binding. 5 residues coordinate sn-glycerol 3-phosphate: K161, D214, S224, R225, and N226. The Proton acceptor role is filled by K161. R225 is a binding site for NADPH. NADPH-binding residues include V249 and E251.

The protein belongs to the NAD-dependent glycerol-3-phosphate dehydrogenase family.

The protein resides in the cytoplasm. The enzyme catalyses sn-glycerol 3-phosphate + NAD(+) = dihydroxyacetone phosphate + NADH + H(+). The catalysed reaction is sn-glycerol 3-phosphate + NADP(+) = dihydroxyacetone phosphate + NADPH + H(+). The protein operates within membrane lipid metabolism; glycerophospholipid metabolism. Its function is as follows. Catalyzes the reduction of the glycolytic intermediate dihydroxyacetone phosphate (DHAP) to sn-glycerol 3-phosphate (G3P), the key precursor for phospholipid synthesis. In Campylobacter jejuni subsp. jejuni serotype O:23/36 (strain 81-176), this protein is Glycerol-3-phosphate dehydrogenase [NAD(P)+].